A 487-amino-acid chain; its full sequence is Cobyric acid synthase (487 aa).

A GATase cobBQ-type domain is found at 251 to 439; that stretch reads KLKVVAPAYP…CHGVLDHPEA (189 aa). Cys332 (nucleophile) is an active-site residue. His431 is a catalytic residue.

Belongs to the CobB/CobQ family. CobQ subfamily.

Its pathway is cofactor biosynthesis; adenosylcobalamin biosynthesis. Catalyzes amidations at positions B, D, E, and G on adenosylcobyrinic A,C-diamide. NH(2) groups are provided by glutamine, and one molecule of ATP is hydrogenolyzed for each amidation. The chain is Cobyric acid synthase from Dechloromonas aromatica (strain RCB).